Here is a 1073-residue protein sequence, read N- to C-terminus: Semaphorin-6D (1073 aa).

The first 20 residues, 1 to 20 (MRVFLLCAYILLLMVSQLRA), serve as a signal peptide directing secretion. Topologically, residues 21-662 (VSFPEDDEPL…GESNQMVHMN (642 aa)) are extracellular. Residues 27 to 512 (DEPLNTVDYH…FSSCIIRIPL (486 aa)) form the Sema domain. Asparagine 51 carries an N-linked (GlcNAc...) asparagine glycan. Intrachain disulfides connect cysteine 108–cysteine 118, cysteine 136–cysteine 145, cysteine 259–cysteine 370, and cysteine 284–cysteine 329. Asparagine 283 is a glycosylation site (N-linked (GlcNAc...) asparagine). N-linked (GlcNAc...) asparagine glycosylation is found at asparagine 435 and asparagine 461. 4 disulfide bridges follow: cysteine 477–cysteine 506, cysteine 515–cysteine 533, cysteine 521–cysteine 568, and cysteine 525–cysteine 541. Residues 514-569 (RCERYGSCKKSCIASRDPYCGWLSQGSCGRVTPGMLAEGYEQDTEFGNTAHLGDCH) form the PSI domain. Residue asparagine 631 is glycosylated (N-linked (GlcNAc...) asparagine). A helical transmembrane segment spans residues 663-683 (VLITCVFAAFVLGAFIAGVAV). Residues 684–1073 (YCYRDMFVRK…SVRPLNKYTY (390 aa)) lie on the Cytoplasmic side of the membrane. A phosphoserine mark is found at serine 723, serine 734, and serine 744. Disordered regions lie at residues 744-775 (SRKE…PTPE), 787-825 (AMKS…GHIP), 839-874 (TSFS…RSVD), 914-1005 (SMSE…PTPT), and 1021-1073 (LQPS…KYTY). A Phosphothreonine modification is found at threonine 773. Over residues 790–805 (SHSEKAHGHGASRKET) the composition is skewed to basic and acidic residues. Phosphoserine occurs at positions 931, 957, and 983. A compositionally biased stretch (polar residues) spans 931–942 (SPPSTLPRNSPT). Polar residues-rich tracts occupy residues 980-995 (NLNS…QPSM) and 1021-1037 (LQPS…NGTL).

This sequence belongs to the semaphorin family.

It localises to the cell membrane. Its subcellular location is the cytoplasm. Shows growth cone collapsing activity on dorsal root ganglion (DRG) neurons in vitro. May be a stop signal for the DRG neurons in their target areas, and possibly also for other neurons. May also be involved in the maintenance and remodeling of neuronal connections. Ligand of TREM2 with PLXNA1 as coreceptor in dendritic cells, plays a role in the generation of immune responses and skeletal homeostasis. The chain is Semaphorin-6D from Homo sapiens (Human).